The primary structure comprises 152 residues: SsrA-binding protein (152 aa).

The protein belongs to the SmpB family.

Its subcellular location is the cytoplasm. Its function is as follows. Required for rescue of stalled ribosomes mediated by trans-translation. Binds to transfer-messenger RNA (tmRNA), required for stable association of tmRNA with ribosomes. tmRNA and SmpB together mimic tRNA shape, replacing the anticodon stem-loop with SmpB. tmRNA is encoded by the ssrA gene; the 2 termini fold to resemble tRNA(Ala) and it encodes a 'tag peptide', a short internal open reading frame. During trans-translation Ala-aminoacylated tmRNA acts like a tRNA, entering the A-site of stalled ribosomes, displacing the stalled mRNA. The ribosome then switches to translate the ORF on the tmRNA; the nascent peptide is terminated with the 'tag peptide' encoded by the tmRNA and targeted for degradation. The ribosome is freed to recommence translation, which seems to be the essential function of trans-translation. This Helicobacter acinonychis (strain Sheeba) protein is SsrA-binding protein.